The sequence spans 200 residues: Peptidyl-tRNA hydrolase (200 aa).

Position 15 (Y15) interacts with tRNA. H20 serves as the catalytic Proton acceptor. Residues F66, N68, and N114 each contribute to the tRNA site.

It belongs to the PTH family. In terms of assembly, monomer.

It localises to the cytoplasm. It carries out the reaction an N-acyl-L-alpha-aminoacyl-tRNA + H2O = an N-acyl-L-amino acid + a tRNA + H(+). Its function is as follows. Hydrolyzes ribosome-free peptidyl-tRNAs (with 1 or more amino acids incorporated), which drop off the ribosome during protein synthesis, or as a result of ribosome stalling. Functionally, catalyzes the release of premature peptidyl moieties from peptidyl-tRNA molecules trapped in stalled 50S ribosomal subunits, and thus maintains levels of free tRNAs and 50S ribosomes. This Ralstonia nicotianae (strain ATCC BAA-1114 / GMI1000) (Ralstonia solanacearum) protein is Peptidyl-tRNA hydrolase.